The following is a 611-amino-acid chain: Chaperone protein DnaK (611 aa).

Threonine 173 is subject to Phosphothreonine; by autocatalysis. 2 disordered regions span residues aspartate 525–glycine 548 and tyrosine 573–lysine 611. Residues glutamate 529–leucine 542 show a composition bias toward basic and acidic residues. Over residues glutamine 574–glutamine 591 the composition is skewed to low complexity. Over residues alanine 599–lysine 611 the composition is skewed to basic and acidic residues.

It belongs to the heat shock protein 70 family.

Its function is as follows. Acts as a chaperone. The protein is Chaperone protein DnaK of Staphylococcus haemolyticus (strain JCSC1435).